The sequence spans 1099 residues: Inverted formin-2 (1099 aa).

Residues 1 to 330 (MSLTEGAHTK…RAVLLADDCQ (330 aa)) enclose the GBD/FH3 domain. Basic and acidic residues-rich tracts occupy residues 348 to 359 (SSKEKRKTDKCT) and 367 to 385 (QTDK…KKDP). 3 disordered regions span residues 348–391 (SSKE…SGIP), 432–509 (PSPP…PTPP), and 1000–1019 (AEKR…KGEN). Positions 426 to 569 (TCSSVLPSPP…GMLPPPPPLP (144 aa)) constitute an FH1 domain. The span at 452 to 499 (PLPPPPPPLPGTELSPPPPGMVALSLPPPPPPLPGMGGMLPPPPPPLP) shows a compositional bias: pro residues. In terms of domain architecture, FH2 spans 621-1009 (FLKVNKPTLK…AEKRKQQIAD (389 aa)). Positions 907–1019 (LKKLRDLQNK…EETKRQKGEN (113 aa)) form a coiled coil. The region spanning 1037–1052 (DDLLADIKKGFQLRKT) is the WH2 domain. Positions 1064 to 1085 (KTLSSETNRTDIQHVGKRPEVP) are disordered. The span at 1071 to 1083 (NRTDIQHVGKRPE) shows a compositional bias: basic and acidic residues.

This sequence belongs to the formin homology family.

In Xenopus laevis (African clawed frog), this protein is Inverted formin-2 (inf2).